The chain runs to 141 residues: Large ribosomal subunit protein uL23A (141 aa).

Residues serine 68 and serine 70 each carry the phosphoserine modification.

The protein belongs to the universal ribosomal protein uL23 family. Component of the large ribosomal subunit (LSU). Mature yeast ribosomes consist of a small (40S) and a large (60S) subunit. The 40S small subunit contains 1 molecule of ribosomal RNA (18S rRNA) and at least 33 different proteins. The large 60S subunit contains 3 rRNA molecules (25S, 5.8S and 5S rRNA) and at least 46 different proteins. uL23 is associated with the polypeptide exit tunnel.

The protein resides in the cytoplasm. In terms of biological role, this protein binds to a specific region on the 26S rRNA. Its function is as follows. Component of the ribosome, a large ribonucleoprotein complex responsible for the synthesis of proteins in the cell. The small ribosomal subunit (SSU) binds messenger RNAs (mRNAs) and translates the encoded message by selecting cognate aminoacyl-transfer RNA (tRNA) molecules. The large subunit (LSU) contains the ribosomal catalytic site termed the peptidyl transferase center (PTC), which catalyzes the formation of peptide bonds, thereby polymerizing the amino acids delivered by tRNAs into a polypeptide chain. The nascent polypeptides leave the ribosome through a tunnel in the LSU and interact with protein factors that function in enzymatic processing, targeting, and the membrane insertion of nascent chains at the exit of the ribosomal tunnel. uL23 is a major component of the universal docking site for these factors at the polypeptide exit tunnel. In Schizosaccharomyces pombe (strain 972 / ATCC 24843) (Fission yeast), this protein is Large ribosomal subunit protein uL23A (rpl2501).